Consider the following 321-residue polypeptide: Malate dehydrogenase (321 aa).

NAD(+)-binding positions include 10-15 (GSGMIG) and aspartate 34. Substrate-binding residues include arginine 83 and arginine 89. NAD(+) is bound by residues asparagine 96 and 119–121 (ITN). Substrate is bound by residues asparagine 121 and arginine 152. Histidine 176 serves as the catalytic Proton acceptor.

It belongs to the LDH/MDH superfamily. MDH type 3 family.

The catalysed reaction is (S)-malate + NAD(+) = oxaloacetate + NADH + H(+). Catalyzes the reversible oxidation of malate to oxaloacetate. The polypeptide is Malate dehydrogenase (Bartonella bacilliformis (strain ATCC 35685 / KC583 / Herrer 020/F12,63)).